Reading from the N-terminus, the 292-residue chain is tRNA pseudouridine synthase B (292 aa).

Asp38 serves as the catalytic Nucleophile.

The protein belongs to the pseudouridine synthase TruB family. Type 1 subfamily.

It carries out the reaction uridine(55) in tRNA = pseudouridine(55) in tRNA. Responsible for synthesis of pseudouridine from uracil-55 in the psi GC loop of transfer RNAs. The protein is tRNA pseudouridine synthase B of Streptococcus pneumoniae serotype 4 (strain ATCC BAA-334 / TIGR4).